A 422-amino-acid chain; its full sequence is Alcohol dehydrogenase 4 (422 aa).

A mitochondrion-targeting transit peptide spans 1–29 (MSILRSPFRLIRSPARFFPSLFHSSCNQS). NAD(+) is bound by residues Asp-82, Asn-114, Gly-141, Ser-142, Thr-181, Thr-182, Thr-190, Phe-192, Lys-203, and Gly-225. Fe(2+) contacts are provided by Asp-237, His-241, and His-306. His-310 and His-320 together coordinate NAD(+). His-320 is a Fe(2+) binding site.

Belongs to the iron-containing alcohol dehydrogenase family. It depends on Zn(2+) as a cofactor.

It is found in the mitochondrion matrix. The enzyme catalyses a primary alcohol + NAD(+) = an aldehyde + NADH + H(+). It catalyses the reaction a secondary alcohol + NAD(+) = a ketone + NADH + H(+). The catalysed reaction is ethanol + NAD(+) = acetaldehyde + NADH + H(+). Functionally, involved in ethanol oxidation in mitochondria. The protein is Alcohol dehydrogenase 4 (adh4) of Schizosaccharomyces pombe (strain 972 / ATCC 24843) (Fission yeast).